A 250-amino-acid polypeptide reads, in one-letter code: Tetrathionate reductase subunit B (250 aa).

A signal peptide (tat-type signal) is located at residues 1–33 (MWTGVNMDSSKRQFLQQLGVLTAGASLVPLAEA). 3 4Fe-4S ferredoxin-type domains span residues 50–79 (YAML…PQGA), 97–128 (VTNV…QRED), and 129–158 (GIVV…INHE). [4Fe-4S] cluster contacts are provided by cysteine 59, cysteine 62, cysteine 65, cysteine 69, cysteine 106, cysteine 109, cysteine 114, cysteine 118, cysteine 138, cysteine 141, cysteine 144, cysteine 148, cysteine 165, cysteine 168, cysteine 180, and cysteine 184.

As to quaternary structure, probably composed of three subunits: TtrA, TtrB and TtrC. Predicted to be exported by the Tat system. The position of the signal peptide cleavage has not been experimentally proven.

The protein resides in the periplasm. Its subcellular location is the cell inner membrane. In terms of biological role, part of a membrane-bound tetrathionate reductase that catalyzes the reduction of tetrathionate to thiosulfate. TtrB is probably involved in transfer of electrons from TtrC to TtrA. During mice infection, the ability to use tetrathionate as an electron acceptor is a growth advantage for S.typhimurium over the competing microbiota in the lumen of the inflamed gut. This is Tetrathionate reductase subunit B (ttrB) from Salmonella typhimurium (strain LT2 / SGSC1412 / ATCC 700720).